Here is a 294-residue protein sequence, read N- to C-terminus: Tyrosine-protein phosphatase (294 aa).

Residues 1-24 (MKTHHANLALALMLGLSSSATAVA) form the signal peptide. Catalysis depends on cysteine 182, which acts as the Phosphocysteine intermediate. Basic and acidic residues-rich tracts occupy residues 221–231 (QPKDSDERADH) and 238–247 (PGDRPQDGGH). The interval 221 to 252 (QPKDSDERADHGAGQAEPGDRPQDGGHGRYRA) is disordered.

This sequence belongs to the protein-tyrosine phosphatase family. As to quaternary structure, monomer.

It carries out the reaction O-phospho-L-tyrosyl-[protein] + H2O = L-tyrosyl-[protein] + phosphate. The sequence is that of Tyrosine-protein phosphatase (iphP) from Nostoc commune.